Here is a 482-residue protein sequence, read N- to C-terminus: tRNA sulfurtransferase (482 aa).

In terms of domain architecture, THUMP spans 61–165; that stretch reads LAIRDALTRI…DDRLLLIKGR (105 aa). Residues 183-184, Lys265, Gly287, and Gln296 contribute to the ATP site; that span reads LI. Cys344 and Cys456 are joined by a disulfide. Residues 404 to 482 enclose the Rhodanese domain; it reads FGANDVILDI…GFANVKVYRP (79 aa). Cys456 functions as the Cysteine persulfide intermediate in the catalytic mechanism.

Belongs to the ThiI family.

The protein localises to the cytoplasm. The catalysed reaction is [ThiI sulfur-carrier protein]-S-sulfanyl-L-cysteine + a uridine in tRNA + 2 reduced [2Fe-2S]-[ferredoxin] + ATP + H(+) = [ThiI sulfur-carrier protein]-L-cysteine + a 4-thiouridine in tRNA + 2 oxidized [2Fe-2S]-[ferredoxin] + AMP + diphosphate. It catalyses the reaction [ThiS sulfur-carrier protein]-C-terminal Gly-Gly-AMP + S-sulfanyl-L-cysteinyl-[cysteine desulfurase] + AH2 = [ThiS sulfur-carrier protein]-C-terminal-Gly-aminoethanethioate + L-cysteinyl-[cysteine desulfurase] + A + AMP + 2 H(+). The protein operates within cofactor biosynthesis; thiamine diphosphate biosynthesis. Catalyzes the ATP-dependent transfer of a sulfur to tRNA to produce 4-thiouridine in position 8 of tRNAs, which functions as a near-UV photosensor. Also catalyzes the transfer of sulfur to the sulfur carrier protein ThiS, forming ThiS-thiocarboxylate. This is a step in the synthesis of thiazole, in the thiamine biosynthesis pathway. The sulfur is donated as persulfide by IscS. The sequence is that of tRNA sulfurtransferase from Salmonella arizonae (strain ATCC BAA-731 / CDC346-86 / RSK2980).